Here is a 220-residue protein sequence, read N- to C-terminus: Transcriptional regulatory protein LnrK (220 aa).

Residues 3-119 form the Response regulatory domain; the sequence is KIIITDDQDI…TIVKAVMTVH (117 aa). The residue at position 54 (Asp54) is a 4-aspartylphosphate. Residues 151–216 form the HTH luxR-type domain; the sequence is KPNELLDLTE…QAAIYSVRYG (66 aa). Residues 175-194 constitute a DNA-binding region (H-T-H motif); the sequence is NKEIAEKLYITEGTVKNHVS.

Phosphorylated by LnrJ.

It is found in the cytoplasm. Required for resistance to linearmycins, a family of antibiotic-specialized metabolites produced by some streptomycetes. Member of the two-component regulatory system LnrJ/LnrK, which induces expression of the LnrLMN ABC transporter in response to linearmycins and other polyenes. Probably binds to the promoter region of the lnrLMN operon and directly regulates its expression. May also promote biofilm formation. This is Transcriptional regulatory protein LnrK from Bacillus subtilis (strain 168).